The following is a 248-amino-acid chain: Probable S-methyl-5'-thioinosine phosphorylase (248 aa).

Residues threonine 12 and 54–55 (RH) contribute to the phosphate site. Methionine 187 contacts substrate. Residue threonine 188 participates in phosphate binding. 211-213 (NWA) contacts substrate.

The protein belongs to the PNP/MTAP phosphorylase family. MTAP subfamily. Homotrimer.

It catalyses the reaction S-methyl-5'-thioinosine + phosphate = 5-(methylsulfanyl)-alpha-D-ribose 1-phosphate + hypoxanthine. Its pathway is purine metabolism; purine nucleoside salvage. In terms of biological role, catalyzes the reversible phosphorylation of S-methyl-5'-thioinosine (MTI) to hypoxanthine and 5-methylthioribose-1-phosphate. Involved in the breakdown of S-methyl-5'-thioadenosine (MTA), a major by-product of polyamine biosynthesis. Catabolism of (MTA) occurs via deamination to MTI and phosphorolysis to hypoxanthine. This chain is Probable S-methyl-5'-thioinosine phosphorylase, found in Xylella fastidiosa (strain Temecula1 / ATCC 700964).